The sequence spans 545 residues: Chaperonin GroEL (545 aa).

Residues 30-33 (TLGP), lysine 51, 87-91 (DGTTT), glycine 415, and aspartate 495 contribute to the ATP site.

This sequence belongs to the chaperonin (HSP60) family. Forms a cylinder of 14 subunits composed of two heptameric rings stacked back-to-back. Interacts with the co-chaperonin GroES.

It is found in the cytoplasm. The catalysed reaction is ATP + H2O + a folded polypeptide = ADP + phosphate + an unfolded polypeptide.. Functionally, together with its co-chaperonin GroES, plays an essential role in assisting protein folding. The GroEL-GroES system forms a nano-cage that allows encapsulation of the non-native substrate proteins and provides a physical environment optimized to promote and accelerate protein folding. The polypeptide is Chaperonin GroEL (Shewanella sp. (strain ANA-3)).